The primary structure comprises 203 residues: Auxin-responsive protein IAA4 (203 aa).

The interval 1–31 is disordered; it reads MEECKGGGMSPSSSMDSSTHPALSTTSSAAT. Positions 10-31 are enriched in low complexity; it reads SPSSSMDSSTHPALSTTSSAAT. The EAR-like (transcriptional repression) signature appears at 40-44; the sequence is LRLGL. Residues 108–202 form the PB1 domain; it reads TLFVKVYMEG…KKLRIARMDK (95 aa).

This sequence belongs to the Aux/IAA family. Homodimers and heterodimers.

Its subcellular location is the nucleus. In terms of biological role, aux/IAA proteins are short-lived transcriptional factors that function as repressors of early auxin response genes at low auxin concentrations. This chain is Auxin-responsive protein IAA4 (IAA4), found in Oryza sativa subsp. japonica (Rice).